The primary structure comprises 396 residues: NADH-quinone oxidoreductase subunit D (396 aa).

The protein belongs to the complex I 49 kDa subunit family. In terms of assembly, NDH-1 is composed of 14 different subunits. Subunits NuoB, C, D, E, F, and G constitute the peripheral sector of the complex.

The protein localises to the cell inner membrane. It catalyses the reaction a quinone + NADH + 5 H(+)(in) = a quinol + NAD(+) + 4 H(+)(out). NDH-1 shuttles electrons from NADH, via FMN and iron-sulfur (Fe-S) centers, to quinones in the respiratory chain. The immediate electron acceptor for the enzyme in this species is believed to be ubiquinone. Couples the redox reaction to proton translocation (for every two electrons transferred, four hydrogen ions are translocated across the cytoplasmic membrane), and thus conserves the redox energy in a proton gradient. This Methylorubrum populi (strain ATCC BAA-705 / NCIMB 13946 / BJ001) (Methylobacterium populi) protein is NADH-quinone oxidoreductase subunit D.